Here is a 67-residue protein sequence, read N- to C-terminus: Prokaryotic ubiquitin-like protein Pup (67 aa).

Positions 1-13 (MAGQEQQQPQSRD) are enriched in low complexity. The disordered stretch occupies residues 1–48 (MAGQEQQQPQSRDSQVDEDIPEAPPAPPEAQASASTEGVDDLLDEIDG). Residues 25-61 (PAPPEAQASASTEGVDDLLDEIDGVLESNAEEFVRAF) form an ARC ATPase binding region. Acidic residues predominate over residues 38-48 (GVDDLLDEIDG). Residue Gln-67 is modified to Deamidated glutamine. Gln-67 is covalently cross-linked (Isoglutamyl lysine isopeptide (Gln-Lys) (interchain with K-? in acceptor proteins)).

Belongs to the prokaryotic ubiquitin-like protein family. As to quaternary structure, strongly interacts with the proteasome-associated ATPase ARC through a hydrophobic interface; the interacting region of Pup lies in its C-terminal half. There is one Pup binding site per ARC hexamer ring. Post-translationally, is modified by deamidation of its C-terminal glutamine to glutamate by the deamidase Dop, a prerequisite to the subsequent pupylation process.

Its pathway is protein degradation; proteasomal Pup-dependent pathway. Protein modifier that is covalently attached to lysine residues of substrate proteins, thereby targeting them for proteasomal degradation. The tagging system is termed pupylation. This is Prokaryotic ubiquitin-like protein Pup from Pseudarthrobacter chlorophenolicus (strain ATCC 700700 / DSM 12829 / CIP 107037 / JCM 12360 / KCTC 9906 / NCIMB 13794 / A6) (Arthrobacter chlorophenolicus).